Here is a 288-residue protein sequence, read N- to C-terminus: Acetyl-coenzyme A carboxylase carboxyl transferase subunit beta (288 aa).

A CoA carboxyltransferase N-terminal domain is found at 34–288 (LFAKCPACKH…HLVAFHGGGQ (255 aa)). Positions 38, 41, 56, and 59 each coordinate Zn(2+). A C4-type zinc finger spans residues 38–59 (CPACKHMIYKKDLGLAKICPTC).

Belongs to the AccD/PCCB family. In terms of assembly, acetyl-CoA carboxylase is a heterohexamer composed of biotin carboxyl carrier protein (AccB), biotin carboxylase (AccC) and two subunits each of ACCase subunit alpha (AccA) and ACCase subunit beta (AccD). Zn(2+) is required as a cofactor.

It localises to the cytoplasm. The catalysed reaction is N(6)-carboxybiotinyl-L-lysyl-[protein] + acetyl-CoA = N(6)-biotinyl-L-lysyl-[protein] + malonyl-CoA. The protein operates within lipid metabolism; malonyl-CoA biosynthesis; malonyl-CoA from acetyl-CoA: step 1/1. In terms of biological role, component of the acetyl coenzyme A carboxylase (ACC) complex. Biotin carboxylase (BC) catalyzes the carboxylation of biotin on its carrier protein (BCCP) and then the CO(2) group is transferred by the transcarboxylase to acetyl-CoA to form malonyl-CoA. This Streptococcus pyogenes serotype M28 (strain MGAS6180) protein is Acetyl-coenzyme A carboxylase carboxyl transferase subunit beta.